Here is a 218-residue protein sequence, read N- to C-terminus: MRLILLGAPGAGKGTQAAFICQKFGIPQISTGDMLRAAVKAGTPLGLQAKAVMDAGQLVSDDLIINLVKERIAEPDCAQGFLFDGFPRTIPQADAMKAAGVKLDYVLEIDVPFDAIIERMSGRRSHPASGRTYHVKFNPPKVEGKDDVTGEPLVQREDDKEETVKKRLQVYSDQTRPLVDYYSSWAKTDPANAPKYRAIQGTGSVEEITQRALTALSS.

ATP is bound at residue 10-15; sequence GAGKGT. Residues 30-59 are NMP; the sequence is STGDMLRAAVKAGTPLGLQAKAVMDAGQLV. Residues Thr-31, Arg-36, 57-59, 85-88, and Gln-92 contribute to the AMP site; these read QLV and GFPR. The segment at 122–159 is LID; it reads GRRSHPASGRTYHVKFNPPKVEGKDDVTGEPLVQREDD. Residues Arg-123 and 132 to 133 each bind ATP; that span reads TY. A disordered region spans residues 127-150; the sequence is PASGRTYHVKFNPPKVEGKDDVTG. AMP contacts are provided by Arg-156 and Arg-167. Gly-203 contributes to the ATP binding site.

The protein belongs to the adenylate kinase family. As to quaternary structure, monomer.

Its subcellular location is the cytoplasm. The catalysed reaction is AMP + ATP = 2 ADP. It participates in purine metabolism; AMP biosynthesis via salvage pathway; AMP from ADP: step 1/1. Functionally, catalyzes the reversible transfer of the terminal phosphate group between ATP and AMP. Plays an important role in cellular energy homeostasis and in adenine nucleotide metabolism. In Acidovorax ebreus (strain TPSY) (Diaphorobacter sp. (strain TPSY)), this protein is Adenylate kinase.